Reading from the N-terminus, the 221-residue chain is Deoxyribose-phosphate aldolase 1 (221 aa).

Asp-89 (proton donor/acceptor) is an active-site residue. The Schiff-base intermediate with acetaldehyde role is filled by Lys-152. Lys-181 functions as the Proton donor/acceptor in the catalytic mechanism.

It belongs to the DeoC/FbaB aldolase family. DeoC type 1 subfamily.

The protein localises to the cytoplasm. The enzyme catalyses 2-deoxy-D-ribose 5-phosphate = D-glyceraldehyde 3-phosphate + acetaldehyde. It functions in the pathway carbohydrate degradation; 2-deoxy-D-ribose 1-phosphate degradation; D-glyceraldehyde 3-phosphate and acetaldehyde from 2-deoxy-alpha-D-ribose 1-phosphate: step 2/2. Catalyzes a reversible aldol reaction between acetaldehyde and D-glyceraldehyde 3-phosphate to generate 2-deoxy-D-ribose 5-phosphate. The sequence is that of Deoxyribose-phosphate aldolase 1 from Oceanobacillus iheyensis (strain DSM 14371 / CIP 107618 / JCM 11309 / KCTC 3954 / HTE831).